A 1648-amino-acid polypeptide reads, in one-letter code: Putative 1-phosphatidylinositol-3-phosphate 5-kinase FAB1C (1648 aa).

A compositionally biased stretch (basic and acidic residues) spans 97–106 (YDKVHPRDSP). Disordered regions lie at residues 97-116 (YDKVHPRDSPDPPSSLATES), 241-276 (QEDHEEEEDKLQQPLDFENNGRIWYPPPPEDENDDA), 721-746 (SEIPETPTQQPSGEEDNGRGEEENQL), and 1083-1139 (KTGD…GTSL). Basic and acidic residues predominate over residues 1084-1130 (TGDDNAPRNPEMHDPPKIDRRMQEGSDERDEQSHTDSEANGDNKDPE). Residues 1316–1639 (NLNNRESEPS…RFRKAMTTYF (324 aa)) enclose the PIPK domain.

As to quaternary structure, component of the PI(3,5)P2 regulatory complex at least composed of ATG18, SAC/FIG4, FAB1 and VAC14. It depends on Mg(2+) as a cofactor. Requires Mn(2+) as cofactor.

It catalyses the reaction a 1,2-diacyl-sn-glycero-3-phospho-(1D-myo-inositol-3-phosphate) + ATP = a 1,2-diacyl-sn-glycero-3-phospho-(1D-myo-inositol-3,5-bisphosphate) + ADP + H(+). In terms of biological role, the PI(3,5)P2 regulatory complex regulates both the synthesis and turnover of phosphatidylinositol 3,5-bisphosphate (PtdIns(3,5)P2). Catalyzes the phosphorylation of phosphatidylinositol 3-phosphate on the fifth hydroxyl of the myo-inositol ring, to form phosphatidylinositol 3,5-bisphosphate. The chain is Putative 1-phosphatidylinositol-3-phosphate 5-kinase FAB1C (FAB1C) from Arabidopsis thaliana (Mouse-ear cress).